The sequence spans 392 residues: Tryptophan synthase beta chain (392 aa).

Lys86 bears the N6-(pyridoxal phosphate)lysine mark.

The protein belongs to the TrpB family. As to quaternary structure, tetramer of two alpha and two beta chains. Pyridoxal 5'-phosphate is required as a cofactor.

It catalyses the reaction (1S,2R)-1-C-(indol-3-yl)glycerol 3-phosphate + L-serine = D-glyceraldehyde 3-phosphate + L-tryptophan + H2O. It participates in amino-acid biosynthesis; L-tryptophan biosynthesis; L-tryptophan from chorismate: step 5/5. The beta subunit is responsible for the synthesis of L-tryptophan from indole and L-serine. The sequence is that of Tryptophan synthase beta chain from Methanocorpusculum labreanum (strain ATCC 43576 / DSM 4855 / Z).